Here is a 198-residue protein sequence, read N- to C-terminus: Nucleoside triphosphate pyrophosphatase (198 aa).

The Proton acceptor role is filled by Asp-74.

It belongs to the Maf family. The cofactor is a divalent metal cation.

It is found in the cytoplasm. It carries out the reaction a ribonucleoside 5'-triphosphate + H2O = a ribonucleoside 5'-phosphate + diphosphate + H(+). The catalysed reaction is a 2'-deoxyribonucleoside 5'-triphosphate + H2O = a 2'-deoxyribonucleoside 5'-phosphate + diphosphate + H(+). Nucleoside triphosphate pyrophosphatase. May have a dual role in cell division arrest and in preventing the incorporation of modified nucleotides into cellular nucleic acids. This is Nucleoside triphosphate pyrophosphatase from Sphingopyxis alaskensis (strain DSM 13593 / LMG 18877 / RB2256) (Sphingomonas alaskensis).